The chain runs to 638 residues: uncharacterized protein (638 aa).

Positions 1 to 31 are cleaved as a signal peptide; that stretch reads MKFIKFNDSTIDSFLFMMLTDLAKTLTKSEA. 4 stretches are compositionally biased toward basic and acidic residues: residues 247–256, 273–284, 301–310, and 329–342; these read EEKKAPKLSD, EEMPTWHRETEA, DLGKDASREG, and RKDY…ESQK. 2 disordered regions span residues 247 to 285 and 301 to 354; these read EEKK…TEAP and DLGK…ADGK. The 188-residue stretch at 445-632 folds into the VWFA domain; the sequence is FTLLVDCSAS…DVLYPLLKKL (188 aa).

This is an uncharacterized protein from Bacillus subtilis (strain 168).